The primary structure comprises 499 residues: DAZ protein 1 (499 aa).

Residues 1–29 form a disordered region; it reads MMSPPLRYQKDQQNQQHQQNQSQQAAHQM. Over residues 12–28 the composition is skewed to low complexity; the sequence is QQNQQHQQNQSQQAAHQ. The RRM domain occupies 66 to 144; that stretch reads PNRIFVGGFP…SRKLNLGPAI (79 aa). The segment covering 195-224 has biased composition (low complexity); it reads FVYPPLRSQDQSRQQSEQQTTPQNSPTNLQ. 2 disordered regions span residues 195–304 and 406–499; these read FVYP…NNGG and YPGN…TKNN. The DAZ domain maps to 214-236; that stretch reads TTPQNSPTNLQHQQSPQVFFGGD. Over residues 251 to 262 the composition is skewed to basic and acidic residues; that stretch reads EKSEVSPEKHES. A compositionally biased stretch (polar residues) spans 263–279; sequence VSPQPLLPNQNVLNTQY. Residues 280-304 show a composition bias toward low complexity; the sequence is SQGQQQWNSNVQQQQQQQMDSNNGG. Polar residues predominate over residues 406-425; sequence YPGNFSQQHTMGNNENTFSL. Residues 438-447 are compositionally biased toward basic and acidic residues; sequence KPSECQDKKT. Over residues 480–499 the composition is skewed to low complexity; it reads LSPLSASLQSLAISSPTKNN.

This sequence belongs to the RRM DAZ family. Germline specific. More strongly expressed during oogenesis than during spermatogenesis. During the larval stages, it is more abundant at the distal region than the proximal region of the gonad. In young adult hermaphrodites, it is expressed at a very low level in the distal mitotic region of the gonad, and begins to accumulate in the meiotic transition zone. Highly expressed in the proximal pachytene region. Not expressed in mature oocytes. Not expressed in the spermatheca. Weakly or not expressed in the germline of adult males.

Functionally, RNA-binding protein that plays a central role in oogenesis, but not for spermatogenesis. Required for meiotic entry and germline differentiation, at the pachytene stage of meiosis I of female germline regardless of the sex of the soma. May act by regulating translation of specific mRNAs, possibly by binding to their 3'-UTR. The protein is DAZ protein 1 (daz-1) of Caenorhabditis elegans.